The sequence spans 929 residues: MDSVTTEHKQEVDDRFDTARITAAVDALAEKHQGREDAFRTAMAQLLKAELIAARAAAQAILLKDRHGRRCAERLCHVQDEIIRILYSAATRHLYRSPIPSGAERMAVVATGGYGRGLMAPESDIDLLFILPYKQTAWGEQVAEAILYCLWDMGLKVGHATRSVDESIRQARGDMTIRTAILETRFLTGDQPLYDELVERFDKEVVQGTASEFVTAKLAEREERHRRGGQSRYLVEPNVKDGKGALRDLHTLFWIAKYVYRVRDTDELVERGVFDAQEYRTFRRCADFLWSVRCNLHFYSGRAEERLSFDLQREIAVRLGYTSHPGMQDVERFMKHYFLVAKEVGNLTAILCAKLEDQQAKPAPVLSRMMARLRPTPAKRRVPDSDDFIVDNNRINVAAPDVFKHDPVNLIRIFRLAQKHNLAFHPDAMRDVTRSLGLINAQLRENPEANRLFMEILTSDNAEIVLRRMNETGVLGHFIRAFGKIVSMMQFNMYHHYTVDEHLIRCVGFLQDIERGGIEEFAVASDLMRKIRPEHRSVIYIATLLHDVAKGRPEDHSIAGAKVARRLCPRLGFSPADTELVAWLIEEHLTMSTVAQSRDLSDRKTIENFAAVVQSVEQMKLLTILTTADIRGVGPGVWNGWKAQLLRSLYYETEPVLTGGFSEVDRGKRLTAAYAEFRNAFAEWPADELDAYIARHYPAYWLKVELPRKIRHARFVRSSEQAGHKLAINVGFDEVRGVTELTIFAADHPWLLSIIAGACASAGANIVDAQIYTTTDGRALDTISISREYDRDEDEGRRATRIGEMIEDVLEGKLRLPEVVARRTVRSKARPFVIEPEVTINNQWSDRYTVIEVSGLDRPGLLYELTTAISKLNLNIASAHVATFGERARDVFYVTDLLGAQINAPTRQSAIKSALTHVMAGDKAVQPAA.

Positions 1–383 (MDSVTTEHKQ…RPTPAKRRVP (383 aa)) are uridylyltransferase. Residues 384 to 739 (DSDDFIVDNN…VGFDEVRGVT (356 aa)) form a uridylyl-removing region. Positions 499-622 (VDEHLIRCVG…VQSVEQMKLL (124 aa)) constitute an HD domain. 2 ACT domains span residues 740–822 (ELTI…VVAR) and 850–927 (VIEV…AVQP).

This sequence belongs to the GlnD family. Mg(2+) is required as a cofactor.

The catalysed reaction is [protein-PII]-L-tyrosine + UTP = [protein-PII]-uridylyl-L-tyrosine + diphosphate. It carries out the reaction [protein-PII]-uridylyl-L-tyrosine + H2O = [protein-PII]-L-tyrosine + UMP + H(+). Uridylyltransferase (UTase) activity is inhibited by glutamine, while glutamine activates uridylyl-removing (UR) activity. In terms of biological role, modifies, by uridylylation and deuridylylation, the PII regulatory proteins (GlnB and homologs), in response to the nitrogen status of the cell that GlnD senses through the glutamine level. Under low glutamine levels, catalyzes the conversion of the PII proteins and UTP to PII-UMP and PPi, while under higher glutamine levels, GlnD hydrolyzes PII-UMP to PII and UMP (deuridylylation). Thus, controls uridylylation state and activity of the PII proteins, and plays an important role in the regulation of nitrogen fixation and metabolism. The sequence is that of Bifunctional uridylyltransferase/uridylyl-removing enzyme from Bradyrhizobium diazoefficiens (strain JCM 10833 / BCRC 13528 / IAM 13628 / NBRC 14792 / USDA 110).